We begin with the raw amino-acid sequence, 391 residues long: Formate-dependent phosphoribosylglycinamide formyltransferase (391 aa).

Residues 20–21 (EL) and Glu80 each bind N(1)-(5-phospho-beta-D-ribosyl)glycinamide. Residues Arg112, Lys153, 158–163 (SSGKGQ), 193–196 (EGFV), and Glu201 contribute to the ATP site. The region spanning 117 to 306 (RLAAETLGLP…EFALHVRAIL (190 aa)) is the ATP-grasp domain. Glu265 and Glu277 together coordinate Mg(2+). N(1)-(5-phospho-beta-D-ribosyl)glycinamide-binding positions include Asp284, Lys354, and 361 to 362 (RR).

The protein belongs to the PurK/PurT family. In terms of assembly, homodimer.

The enzyme catalyses N(1)-(5-phospho-beta-D-ribosyl)glycinamide + formate + ATP = N(2)-formyl-N(1)-(5-phospho-beta-D-ribosyl)glycinamide + ADP + phosphate + H(+). Its pathway is purine metabolism; IMP biosynthesis via de novo pathway; N(2)-formyl-N(1)-(5-phospho-D-ribosyl)glycinamide from N(1)-(5-phospho-D-ribosyl)glycinamide (formate route): step 1/1. In terms of biological role, involved in the de novo purine biosynthesis. Catalyzes the transfer of formate to 5-phospho-ribosyl-glycinamide (GAR), producing 5-phospho-ribosyl-N-formylglycinamide (FGAR). Formate is provided by PurU via hydrolysis of 10-formyl-tetrahydrofolate. In Shewanella sp. (strain W3-18-1), this protein is Formate-dependent phosphoribosylglycinamide formyltransferase.